The chain runs to 408 residues: PCI domain-containing protein 2 (408 aa).

Alanine 2 carries the N-acetylalanine modification. Serine 45 is modified (phosphoserine). The 191-residue stretch at 210–400 (VTYRYYVGRK…QKLVVSKQNP (191 aa)) folds into the PCI domain.

It belongs to the CSN12 family. In terms of assembly, component of the nuclear pore complex (NPC)-associated TREX-2 complex (transcription and export complex 2), composed of at least GANP, 2 copies of ENY2, PCID2, SEM1/DSS1, and either centrin CETN2 or centrin CETN3. The TREX-2 complex also associates with ALYREF/ALY and with the nucleoporin NUP153. Interacts with BRCA2. Interacts with SRCAP chromatin remodeling complex component ZNHIT1; the interaction results in inhibition of SRCAP complex activity, preventing the deposition of histone variant H2AZ1/H2A.Z to lymphoid fate regulator genes and restricting lymphoid lineage commitment.

It is found in the cytoplasm. Its subcellular location is the nucleus. The protein localises to the nuclear pore complex. Required for B-cell survival through the regulation of the expression of cell-cycle checkpoint MAD2L1 protein during B cell differentiation. As a component of the TREX-2 complex, involved in the export of mRNAs to the cytoplasm through the nuclear pores. Binds and stabilizes BRCA2 and is thus involved in the control of R-loop-associated DNA damage and transcription-associated genomic instability. Blocks the activity of the SRCAP chromatin remodeling complex by interacting with SRCAP complex member ZNHIT1 and inhibiting its interaction with the complex. This prevents the deposition of histone variant H2AZ1/H2A.Z at the nucleosomes of key lymphoid fate regulator genes which suppresses their expression and restricts lymphoid lineage commitment. In Bos taurus (Bovine), this protein is PCI domain-containing protein 2 (PCID2).